Consider the following 458-residue polypeptide: Argininosuccinate lyase (458 aa).

The protein belongs to the lyase 1 family. Argininosuccinate lyase subfamily.

The protein resides in the cytoplasm. The catalysed reaction is 2-(N(omega)-L-arginino)succinate = fumarate + L-arginine. It functions in the pathway amino-acid biosynthesis; L-arginine biosynthesis; L-arginine from L-ornithine and carbamoyl phosphate: step 3/3. The sequence is that of Argininosuccinate lyase from Lachnospira eligens (strain ATCC 27750 / DSM 3376 / VPI C15-48 / C15-B4) (Eubacterium eligens).